Consider the following 733-residue polypeptide: Protein PAT1 homolog 2 (733 aa).

Disordered regions lie at residues 42–75 (LDQE…PEAL) and 337–366 (LHPQ…PDPY). Residues 49-59 (EPVKLEDDHTK) show a composition bias toward basic and acidic residues. Over residues 346–356 (SQRQRPQSSSR) the composition is skewed to low complexity.

This sequence belongs to the PAT1 family. As to quaternary structure, interacts with ribonucleoprotein complex components. Interacts with cpeb. Oocyte-specific protein. Expressed throughout oogenesis but is not detectable in eggs, embryos, nor in adult tissues (at protein level).

The protein resides in the cytoplasm. Its subcellular location is the nucleus. Functionally, RNA-binding protein that acts as a translational repressor. When overexpressed, able to disperse P-bodies. In Xenopus laevis (African clawed frog), this protein is Protein PAT1 homolog 2 (patl2).